A 184-amino-acid polypeptide reads, in one-letter code: Probable S-adenosyl-L-methionine-binding protein PYRAB06630 (184 aa).

Residues 9–140 (YRPIGIIHSP…YVPEFDVREN (132 aa)) enclose the TsaA-like domain. Residues 26-28 (PIQ), 65-66 (HR), arginine 89, and 120-123 (LDGT) contribute to the S-adenosyl-L-methionine site.

Belongs to the tRNA methyltransferase O family.

The polypeptide is Probable S-adenosyl-L-methionine-binding protein PYRAB06630 (Pyrococcus abyssi (strain GE5 / Orsay)).